A 690-amino-acid chain; its full sequence is Eukaryotic translation initiation factor 3 subunit B (690 aa).

The span at 1–11 shows a compositional bias: basic and acidic residues; it reads MAKKKSEEHSG. The interval 1 to 36 is disordered; the sequence is MAKKKSEEHSGADANDSDYQEEPNFEDPPGFVDNIS. Acidic residues predominate over residues 15 to 25; that stretch reads NDSDYQEEPNF. An RRM domain is found at 57–141; sequence SVVVVDNIPK…HTFAVNLFTD (85 aa). 5 WD repeats span residues 207–246, 293–331, 334–369, 442–484, and 530–575; these read TRERFTDTFVKWSPLGTYVVTFHKPGVAIWGGSSFQKIQK, DGMSVLSMFRWSHDDKFVARMGENSIHIYETPSFFLLDL, IKIPGIRGFSWSPTDNVIAYWVEEQNQIPARVTLME, EIRE…KPSL, and PDHF…IKRT. Residues 595–645 adopt a coiled-coil conformation; that stretch reads EEKQKEIKKNLKKYYAAFEQKDRLRLTRASKELLEKRSQLRETFMEYRNKR.

Belongs to the eIF-3 subunit B family. As to quaternary structure, component of the eukaryotic translation initiation factor 3 (eIF-3) complex. The eIF-3 complex interacts with pix. Interacts with mxt.

The protein localises to the cytoplasm. Functionally, RNA-binding component of the eukaryotic translation initiation factor 3 (eIF-3) complex, which is involved in protein synthesis of a specialized repertoire of mRNAs and, together with other initiation factors, stimulates binding of mRNA and methionyl-tRNAi to the 40S ribosome. The eIF-3 complex specifically targets and initiates translation of a subset of mRNAs involved in cell proliferation. This Drosophila yakuba (Fruit fly) protein is Eukaryotic translation initiation factor 3 subunit B.